Here is a 383-residue protein sequence, read N- to C-terminus: Ovalbumin (383 aa).

Glycine 2 is modified (N-acetylglycine). A signal peptide (not cleaved) is located at residues histidine 22–aspartate 48. Serine 69 carries the post-translational modification Phosphoserine. A disulfide bridge links cysteine 74 with cysteine 121. 2 N-linked (GlcNAc...) asparagine glycosylation sites follow: asparagine 293 and asparagine 312. Serine 345 carries the post-translational modification Phosphoserine.

The protein belongs to the serpin family. Ov-serpin subfamily. Post-translationally, the signal sequence is not cleaved. The functional signal for membrane translocation of ovalbumin becomes accessible when the nascent chain is 50 to 60 residues long. The hydrophobic sequence which lies between residues 27 and 43 folds back on the preceding residues to form an amphipathic hairpin structure which is the signal element recognized by the membrane. Major protein of egg white.

Its subcellular location is the secreted. Its function is as follows. Storage protein of egg white. Lack protease inhibitory activity. The polypeptide is Ovalbumin (SERPINB14) (Coturnix coturnix (Common quail)).